The sequence spans 729 residues: Elongation factor 2 (729 aa).

A tr-type G domain is found at 19–262; that stretch reads EQIRNIAIAA…MVCEHFPNPV (244 aa). GTP is bound by residues 28–35, 94–98, and 148–151; these read AHVDHGKT, DTPGH, and NKVD. Diphthamide is present on H597.

Belongs to the TRAFAC class translation factor GTPase superfamily. Classic translation factor GTPase family. EF-G/EF-2 subfamily.

It localises to the cytoplasm. Its function is as follows. Catalyzes the GTP-dependent ribosomal translocation step during translation elongation. During this step, the ribosome changes from the pre-translocational (PRE) to the post-translocational (POST) state as the newly formed A-site-bound peptidyl-tRNA and P-site-bound deacylated tRNA move to the P and E sites, respectively. Catalyzes the coordinated movement of the two tRNA molecules, the mRNA and conformational changes in the ribosome. The polypeptide is Elongation factor 2 (Natronomonas pharaonis (strain ATCC 35678 / DSM 2160 / CIP 103997 / JCM 8858 / NBRC 14720 / NCIMB 2260 / Gabara) (Halobacterium pharaonis)).